Here is a 308-residue protein sequence, read N- to C-terminus: tRNA pseudouridine synthase B (308 aa).

The Nucleophile role is filled by aspartate 33.

This sequence belongs to the pseudouridine synthase TruB family. Type 1 subfamily.

The catalysed reaction is uridine(55) in tRNA = pseudouridine(55) in tRNA. Its function is as follows. Responsible for synthesis of pseudouridine from uracil-55 in the psi GC loop of transfer RNAs. This Nitrosomonas europaea (strain ATCC 19718 / CIP 103999 / KCTC 2705 / NBRC 14298) protein is tRNA pseudouridine synthase B.